The chain runs to 487 residues: G-patch domain and KOW motifs-containing protein (487 aa).

Disordered stretches follow at residues 65–121, 181–232, and 295–367; these read HKNR…PLLM, VKPL…TGSA, and KVHQ…RPEP. Residues 88–116 are a coiled coil; it reads AVLSQAVKELIEESRRAQEDNSETNQTLS. Composition is skewed to basic and acidic residues over residues 96–106 and 200–209; these read ELIEESRRAQE and SALKHLEPQK. The G-patch domain maps to 154 to 200; sequence VQQYGMAMLRGMGWKEGEGIGRTFKQDVKPLEQKLRPKGLGLGADRS. The 28-residue stretch at 226–253 folds into the KOW 1 domain; it reads GLGTGSAVQIQSGAYKDMYGKVEGIDPD. Basic and acidic residues-rich tracts occupy residues 295-333 and 352-367; these read KVHQ…DVKL and RSPE…RPEP. Residues 428–455 enclose the KOW 2 domain; the sequence is PKEEGEHVMVVLGKYRGMVGKILHRDKQ.

Belongs to the MOS2 family. As to quaternary structure, component of the minor spliceosome, which splices U12-type introns.

The protein localises to the nucleus. Functionally, RNA-binding protein involved in pre-mRNA splicing. The polypeptide is G-patch domain and KOW motifs-containing protein (gpkow) (Xenopus laevis (African clawed frog)).